Consider the following 245-residue polypeptide: tRNA pseudouridine synthase A (245 aa).

Aspartate 52 (nucleophile) is an active-site residue. Tyrosine 111 is a binding site for substrate.

This sequence belongs to the tRNA pseudouridine synthase TruA family. Homodimer.

The catalysed reaction is uridine(38/39/40) in tRNA = pseudouridine(38/39/40) in tRNA. In terms of biological role, formation of pseudouridine at positions 38, 39 and 40 in the anticodon stem and loop of transfer RNAs. The sequence is that of tRNA pseudouridine synthase A from Rickettsia akari (strain Hartford).